A 308-amino-acid polypeptide reads, in one-letter code: MTIALELQQLKKTYPGGVQALRGIDLQVEAGDFYALLGPNGAGKSTTIGIISSLVNKTSGRVSVFGYDLEKDVVNAKRQLGLVPQEFNFNPFETVQQIVVNQAGYYGVERKEAYIRSEKYLKQLDLWGKRNERARMLSGGMKRRLMIARALMHEPKLLILDEPTAGVDIELRRSMWGFLKDLNDKGTTIILTTHYLEEAEMLCRNIGIIQHGELVENTSMKALLAKLKSETFILDLAPKSPLPKLDGYQYRLVDTATLEVEVLREQGINSVFTQLSEQGIQVLSMRNKANRLEELFVSLVNEKQGDRA.

Residues 5–236 (LELQQLKKTY…LKSETFILDL (232 aa)) form the ABC transporter domain. 38 to 45 (GPNGAGKS) serves as a coordination point for ATP.

It belongs to the ABC transporter superfamily.

This is an uncharacterized protein from Escherichia coli (strain K12).